The following is a 140-amino-acid chain: Bacilliredoxin STH2395 (140 aa).

Belongs to the bacilliredoxin family.

The polypeptide is Bacilliredoxin STH2395 (Symbiobacterium thermophilum (strain DSM 24528 / JCM 14929 / IAM 14863 / T)).